Reading from the N-terminus, the 181-residue chain is Crossover junction endodeoxyribonuclease RuvC (181 aa).

Active-site residues include aspartate 7, glutamate 67, and aspartate 139. Mg(2+)-binding residues include aspartate 7, glutamate 67, and aspartate 139.

The protein belongs to the RuvC family. As to quaternary structure, homodimer which binds Holliday junction (HJ) DNA. The HJ becomes 2-fold symmetrical on binding to RuvC with unstacked arms; it has a different conformation from HJ DNA in complex with RuvA. In the full resolvosome a probable DNA-RuvA(4)-RuvB(12)-RuvC(2) complex forms which resolves the HJ. Mg(2+) serves as cofactor.

It localises to the cytoplasm. It catalyses the reaction Endonucleolytic cleavage at a junction such as a reciprocal single-stranded crossover between two homologous DNA duplexes (Holliday junction).. Its function is as follows. The RuvA-RuvB-RuvC complex processes Holliday junction (HJ) DNA during genetic recombination and DNA repair. Endonuclease that resolves HJ intermediates. Cleaves cruciform DNA by making single-stranded nicks across the HJ at symmetrical positions within the homologous arms, yielding a 5'-phosphate and a 3'-hydroxyl group; requires a central core of homology in the junction. The consensus cleavage sequence is 5'-(A/T)TT(C/G)-3'. Cleavage occurs on the 3'-side of the TT dinucleotide at the point of strand exchange. HJ branch migration catalyzed by RuvA-RuvB allows RuvC to scan DNA until it finds its consensus sequence, where it cleaves and resolves the cruciform DNA. This chain is Crossover junction endodeoxyribonuclease RuvC, found in Ralstonia nicotianae (strain ATCC BAA-1114 / GMI1000) (Ralstonia solanacearum).